The sequence spans 186 residues: Transcription factor HES-3 (186 aa).

In terms of domain architecture, bHLH spans 1-49 (MEKKRRARINVSLEQLKSLLEKHYSHQIRKRKLEKADILELSVKYMRSL). The 35-residue stretch at 65-99 (QPSGFRSCLPGVSQLLRRGDEVGSGLRCPLVPESA) folds into the Orange domain. A disordered region spans residues 128-186 (APAAGGPRSPPPLLLLPESLPGSSASVPPPQPASSRCAESPGLGLRVWRPWGSPGDDLN). A compositionally biased stretch (low complexity) spans 142–153 (LLPESLPGSSAS). Positions 175–178 (WRPW) match the WRPW motif motif.

Transcription repression requires formation of a complex with a corepressor protein of the Groucho/TLE family.

The protein resides in the nucleus. Transcriptional repressor of genes that require a bHLH protein for their transcription. The polypeptide is Transcription factor HES-3 (HES3) (Homo sapiens (Human)).